Consider the following 253-residue polypeptide: Proteasome subunit alpha (253 aa).

The disordered stretch occupies residues 229–253; the sequence is ADESQSYIDDIEDAADDSDDDDDEE. Positions 237–253 are enriched in acidic residues; it reads DDIEDAADDSDDDDDEE.

The protein belongs to the peptidase T1A family. As to quaternary structure, the 20S proteasome core is composed of 14 alpha and 14 beta subunits that assemble into four stacked heptameric rings, resulting in a barrel-shaped structure. The two inner rings, each composed of seven catalytic beta subunits, are sandwiched by two outer rings, each composed of seven alpha subunits. The catalytic chamber with the active sites is on the inside of the barrel. Has a gated structure, the ends of the cylinder being occluded by the N-termini of the alpha-subunits. Is capped at one or both ends by the proteasome regulatory ATPase, PAN.

It localises to the cytoplasm. With respect to regulation, the formation of the proteasomal ATPase PAN-20S proteasome complex, via the docking of the C-termini of PAN into the intersubunit pockets in the alpha-rings, triggers opening of the gate for substrate entry. Interconversion between the open-gate and close-gate conformations leads to a dynamic regulation of the 20S proteasome proteolysis activity. Functionally, component of the proteasome core, a large protease complex with broad specificity involved in protein degradation. This is Proteasome subunit alpha from Halobacterium salinarum (strain ATCC 29341 / DSM 671 / R1).